Consider the following 686-residue polypeptide: Methionine--tRNA ligase (686 aa).

Positions 15-25 match the 'HIGH' region motif; it reads PYTNGPIHIGH. Zn(2+) contacts are provided by C147, C150, C160, and C163. Residues 336–340 carry the 'KMSKS' region motif; the sequence is KLSTS. T339 contacts ATP. A tRNA-binding domain is found at 584-686; sequence DFAKMDLRVG…AGVGNGEGIN (103 aa).

This sequence belongs to the class-I aminoacyl-tRNA synthetase family. MetG type 1 subfamily. In terms of assembly, homodimer. It depends on Zn(2+) as a cofactor.

It is found in the cytoplasm. The catalysed reaction is tRNA(Met) + L-methionine + ATP = L-methionyl-tRNA(Met) + AMP + diphosphate. Its function is as follows. Is required not only for elongation of protein synthesis but also for the initiation of all mRNA translation through initiator tRNA(fMet) aminoacylation. This Flavobacterium psychrophilum (strain ATCC 49511 / DSM 21280 / CIP 103535 / JIP02/86) protein is Methionine--tRNA ligase.